A 334-amino-acid polypeptide reads, in one-letter code: F-box only protein 16 (334 aa).

The region spanning 86-132 (LDFTTKLPRVLSVYIFSFLDPRSLCRCAQVSWYWKSLAELDQLWMLK) is the F-box domain. Disordered stretches follow at residues 168–222 (PKTP…WRSS) and 314–334 (LEHLQKHPGLQSPSPRLQSQS). The segment covering 194 to 204 (SPSLAFRSSSS) has biased composition (low complexity). Basic and acidic residues predominate over residues 210–222 (NPGEKELPPWRSS). Residues 323–334 (LQSPSPRLQSQS) are compositionally biased toward low complexity.

As to quaternary structure, part of a SCF (SKP1-cullin-F-box) protein ligase complex.

Functionally, probably recognizes and binds to some phosphorylated proteins and promotes their ubiquitination and degradation. The chain is F-box only protein 16 (Fbxo16) from Mus musculus (Mouse).